A 415-amino-acid chain; its full sequence is Teichoic acid D-alanyltransferase (415 aa).

Residues 1-16 (MIDFLKQLPHLEPYGN) lie on the Extracellular side of the membrane. The helical transmembrane segment at 17 to 36 (PFYFIYLGIALLPIFIGLFF) threads the bilayer. At 37–40 (KKRF) the chain is on the cytoplasmic side. A helical membrane pass occupies residues 41–56 (AIYECLVSITFIVLAL). Residues 57–60 (TGTH) lie on the Extracellular side of the membrane. Residues 61 to 87 (ASQILALLFYIVWQIIWVYSYKRYRSQ) traverse the membrane as a helical segment. The Cytoplasmic segment spans residues 88–90 (RDN). Residues 91–115 (KWVFYLHSFLVVLPLILVKVEPTIN) traverse the membrane as a helical segment. At 116-125 (GTQSLLNFLG) the chain is on the extracellular side. The helical transmembrane segment at 126–142 (ISYLTFRAVGMIIEMRD) threads the bilayer. Residues 143–149 (GVLKEFT) lie on the Cytoplasmic side of the membrane. An intramembrane segment occupies 150 to 179 (LGEFLRFMLFMPTFTSGPIDRFKRFNEDYQ). The Cytoplasmic segment spans residues 180 to 183 (SIPN). Residues 184 to 227 (RDELLNMLEQAVKYIMLGFLYKFVLAQIFGSMLLPPLKAQALSQ) traverse the membrane as a helical segment. Over 228–232 (GGIFN) the chain is Extracellular. Residues 233–264 (LPTLGVMYVYGFDLFFDFAGYSMFALAVSNLM) form a helical membrane-spanning segment. Residues 265–274 (GIKSPINFDK) lie on the Cytoplasmic side of the membrane. Residues 275–311 (PFISRDMKEFWNRWHMSLSFWFRDFVFMRLVIVLMRN) lie within the membrane without spanning it. Residues 312–316 (KVFKN) are Cytoplasmic-facing. A helical membrane pass occupies residues 317-336 (RNTTSNVAYIINMMVMGFWH). His-336 is a catalytic residue. Topologically, residues 337–339 (GIT) are extracellular. A helical transmembrane segment spans residues 340-373 (WYYIAYGIFHGIGLVINDAWLRKKKTINKDRKKA). Residues 374-381 (GLKPLPEN) lie on the Cytoplasmic side of the membrane. A helical transmembrane segment spans residues 382 to 404 (KWTKALGIFITFNTVMLSFLIFS). Residues 405 to 415 (GFLNDLWFTKK) are Extracellular-facing.

The protein belongs to the membrane-bound acyltransferase family.

Its subcellular location is the cell membrane. It functions in the pathway cell wall biogenesis; lipoteichoic acid biosynthesis. Functionally, O-acyltransferase that catalyzes D-alanylation of both teichoic acid and lipoteichoic acid (LTA). D-alanylation of LTA plays an important role in modulating the properties of the cell wall in Gram-positive bacteria, influencing the net charge of the cell wall. Catalyzes D-alanylation from DltC carrier protein. This is Teichoic acid D-alanyltransferase from Streptococcus thermophilus (strain ATCC BAA-250 / LMG 18311).